We begin with the raw amino-acid sequence, 229 residues long: ACD11 homolog protein (229 aa).

An N-acylsphingoid base 1-phosphate contacts are provided by glutamate 84, lysine 88, arginine 123, arginine 127, and histidine 166.

The protein belongs to the GLTP family.

This is ACD11 homolog protein from Arabidopsis thaliana (Mouse-ear cress).